We begin with the raw amino-acid sequence, 371 residues long: Protein lifeguard 1 (371 aa).

Residues 1 to 145 (MSHEKSFLVS…EGPPSYYDNQ (145 aa)) form a disordered region. Residues 14–49 (YPPPNPGYPGGPQPPMPPYAQPPYPGAPYPQPPFQP) show a composition bias toward pro residues. Residues 84–98 (YPQEGYPQGPYPQGG) are compositionally biased toward low complexity. The segment covering 102-114 (GPYPQSPFPPNPY) has biased composition (pro residues). Helical transmembrane passes span 165–185 (VFLV…VFTF), 197–217 (VWTY…LSCC), 228–248 (LVAL…IASF), 253–273 (AVIM…IFSM), 283–303 (MGVL…CIFI), 307–327 (ILEI…LAVD), and 346–366 (FAAL…LTII).

This sequence belongs to the BI1 family. LFG subfamily.

The protein resides in the membrane. In terms of biological role, potential apoptotic regulator. This is Protein lifeguard 1 (GRINA) from Homo sapiens (Human).